Reading from the N-terminus, the 177-residue chain is Large ribosomal subunit protein uL6 (177 aa).

The protein belongs to the universal ribosomal protein uL6 family. Part of the 50S ribosomal subunit.

This protein binds to the 23S rRNA, and is important in its secondary structure. It is located near the subunit interface in the base of the L7/L12 stalk, and near the tRNA binding site of the peptidyltransferase center. This Bradyrhizobium sp. (strain ORS 278) protein is Large ribosomal subunit protein uL6.